The sequence spans 829 residues: Periplasmic nitrate reductase (829 aa).

The tat-type signal signal peptide spans 1-29 (MKMTRRAFVKANAAASAAAVAGITLPASA). The 4Fe-4S Mo/W bis-MGD-type domain occupies 41–97 (ITWDKAPCRFCGTGCSVLVGTQNGKVVATQGDPEAPVNKGLNCIKGYFLSKIMYGQD). 4 residues coordinate [4Fe-4S] cluster: Cys48, Cys51, Cys55, and Cys83. Mo-bis(molybdopterin guanine dinucleotide) is bound by residues Lys85, Gln152, Asn177, Cys181, 214–221 (WGSNMAEM), 245–249 (STYYH), 264–266 (QSD), Met374, Gln378, Asn484, 510–511 (SD), Lys533, Asp560, and 718–727 (TGRVLEHWHT). Phe794 lines the substrate pocket. Positions 802 and 819 each coordinate Mo-bis(molybdopterin guanine dinucleotide).

It belongs to the prokaryotic molybdopterin-containing oxidoreductase family. NasA/NapA/NarB subfamily. Component of the periplasmic nitrate reductase NapAB complex composed of NapA and NapB. It depends on [4Fe-4S] cluster as a cofactor. Mo-bis(molybdopterin guanine dinucleotide) is required as a cofactor. Predicted to be exported by the Tat system. The position of the signal peptide cleavage has not been experimentally proven.

The protein resides in the periplasm. The catalysed reaction is 2 Fe(II)-[cytochrome] + nitrate + 2 H(+) = 2 Fe(III)-[cytochrome] + nitrite + H2O. In terms of biological role, catalytic subunit of the periplasmic nitrate reductase complex NapAB. Receives electrons from NapB and catalyzes the reduction of nitrate to nitrite. This is Periplasmic nitrate reductase from Vibrio campbellii (strain ATCC BAA-1116).